The following is a 342-amino-acid chain: C-X-C chemokine receptor type 6 (342 aa).

Topologically, residues 1 to 32 are extracellular; the sequence is MAEHDYHEDYGFNSFNDSSQEEHQDFLQFSKV. An N-linked (GlcNAc...) asparagine glycan is attached at N16. The helical transmembrane segment at 33–59 threads the bilayer; it reads FLPCMYLVVFVCGLVGNSLVLVISIFY. The Cytoplasmic segment spans residues 60–68; it reads HKLQSLTDV. Residues 69-89 traverse the membrane as a helical segment; that stretch reads FLVNLPLADLVFVCTLPFWAY. Topologically, residues 90 to 103 are extracellular; sequence AGIHEWVFGQVMCK. Residues C102 and C180 are joined by a disulfide bond. Residues 104 to 125 traverse the membrane as a helical segment; sequence SLLGIYTINFYTSMLILTCITV. The Cytoplasmic portion of the chain corresponds to 126 to 143; sequence DRFIVVVKATKAYNQQAK. Residues 144–164 traverse the membrane as a helical segment; sequence RMTWGKVTSLLIWVISLLVSL. Topologically, residues 165 to 187 are extracellular; that stretch reads PQIIYGNVFNLDKLICGYHDEAI. Residues 188-215 traverse the membrane as a helical segment; the sequence is STVVLATQMTLGFFLPLLTMIVCYSVII. Topologically, residues 216–231 are cytoplasmic; that stretch reads KTLLHAGGFQKHRSLK. A helical membrane pass occupies residues 232-259; the sequence is IIFLVMAVFLLTQMPFNLMKLIRSTHWE. The Extracellular segment spans residues 260–275; it reads YYAMTSFHYTIMVTEA. The chain crosses the membrane as a helical span at residues 276–293; that stretch reads IAYLRACLNPVLYAFVSL. Residues 294–342 lie on the Cytoplasmic side of the membrane; sequence KFRKNFWKLVKDIGCLPYLGVSHQWKSSEDNSKTFSASHNVEATSMFQL.

This sequence belongs to the G-protein coupled receptor 1 family.

It localises to the cell membrane. In terms of biological role, receptor for the C-X-C chemokine CXCL16. Used as a coreceptor by SIVs and by strains of HIV-2 and m-tropic HIV-1. The polypeptide is C-X-C chemokine receptor type 6 (CXCR6) (Pan troglodytes (Chimpanzee)).